The following is a 644-amino-acid chain: Zinc finger protein 74 (644 aa).

The KRAB domain occupies 43–114 (VSFKDVAVDF…QREVPRGPCP (72 aa)). C2H2-type zinc fingers lie at residues 248–270 (FVCG…RRWH), 276–298 (YKCD…RRIH), 304–326 (FFCG…QRIH), 332–354 (YKCS…LRVH), 360–382 (YRCG…HRIH), 388–410 (YQCG…EKIH), 416–438 (FKCS…QRTH), 444–466 (FKCA…RRIH), 472–494 (FKCN…RRIH), 500–522 (FDCS…QRIH), 528–550 (YKCS…QKIH), and 556–578 (FKCE…QRLH). Residue lysine 582 forms a Glycyl lysine isopeptide (Lys-Gly) (interchain with G-Cter in SUMO2) linkage.

The protein belongs to the krueppel C2H2-type zinc-finger protein family. As to expression, highly expressed in the fetal brain.

Its subcellular location is the nucleus. Its function is as follows. May play a role in RNA metabolism. The protein is Zinc finger protein 74 (ZNF74) of Homo sapiens (Human).